Here is a 701-residue protein sequence, read N- to C-terminus: Protein SOSEKI 1 (701 aa).

The segment at 8–101 (LSAQVLYQLS…YVLRASELID (94 aa)) is DIX-like oligomerization domain. 4 disordered regions span residues 238 to 262 (STVH…FSPG), 300 to 329 (LPPN…SLNE), 366 to 389 (PYNT…YRTK), and 538 to 575 (IASS…LASP). Basic and acidic residues predominate over residues 306 to 319 (STHEDNSFWRDSRS). A C2HC/C3H-type zinc finger spans residues 658 to 687 (ILQECSICRRTFKPDSLQVHMRGCHPPQYA). Residues Cys662, Cys665, His677, and Cys681 each coordinate Zn(2+).

The protein belongs to the SOSEKI family. In terms of assembly, homodimer. Forms long polymer filaments with other SOKs proteins polymers crucial for polar localization and biological activity. Zn(2+) is required as a cofactor.

It is found in the cell membrane. SOSEKI proteins locally interpret global polarity cues and can influence cell division orientation to coordinate cell polarization relative to body axes. In Physcomitrium patens (Spreading-leaved earth moss), this protein is Protein SOSEKI 1.